We begin with the raw amino-acid sequence, 239 residues long: Phospholipase A2 (239 aa).

A signal peptide spans methionine 1 to serine 19. A propeptide spanning residues methionine 20–glutamate 105 is cleaved from the precursor. The Ca(2+) site is built by tryptophan 113, glycine 115, and glycine 117. 5 disulfide bridges follow: cysteine 114–cysteine 136, cysteine 135–cysteine 174, cysteine 142–cysteine 167, cysteine 165–cysteine 202, and cysteine 207–cysteine 217. Histidine 139 is an active-site residue. Aspartate 140 is a binding site for Ca(2+). A propeptide spanning residues arginine 211–proline 213 is cleaved from the precursor.

The protein belongs to the phospholipase A2 family. Group III subfamily. In terms of assembly, heterodimer composed of a small subunit and a large subunit; disulfid-linked. Ca(2+) is required as a cofactor. Expressed by the venom gland.

The protein localises to the secreted. The catalysed reaction is a 1,2-diacyl-sn-glycero-3-phosphocholine + H2O = a 1-acyl-sn-glycero-3-phosphocholine + a fatty acid + H(+). Its function is as follows. Toxic phospholipase A2, which may catalyze the calcium-dependent hydrolysis of the 2-acyl groups in 3-sn-phosphoglycerides. Inhibits both skeletal (RYR1) and cardiac (RYR2) ryanodine receptors (calcium release channels). Probably blocks ryanodine receptors by generating a lipid product. The sequence is that of Phospholipase A2 from Hoffmannihadrurus gertschi (Scorpion).